The chain runs to 127 residues: Large ribosomal subunit protein bL21c (127 aa).

The protein belongs to the bacterial ribosomal protein bL21 family. As to quaternary structure, part of the 50S ribosomal subunit.

The protein localises to the plastid. It localises to the chloroplast. Functionally, this protein binds to 23S rRNA. The chain is Large ribosomal subunit protein bL21c from Adiantum capillus-veneris (Maidenhair fern).